The primary structure comprises 257 residues: Acetylglutamate kinase (257 aa).

Substrate contacts are provided by residues 43 to 44, arginine 65, and asparagine 157; that span reads GG. ATP-binding positions include 180–185 and 208–210; these read DVSGIL and IIT.

This sequence belongs to the acetylglutamate kinase family. ArgB subfamily. As to quaternary structure, homodimer.

The protein resides in the cytoplasm. The enzyme catalyses N-acetyl-L-glutamate + ATP = N-acetyl-L-glutamyl 5-phosphate + ADP. It functions in the pathway amino-acid biosynthesis; L-arginine biosynthesis; N(2)-acetyl-L-ornithine from L-glutamate: step 2/4. In terms of biological role, catalyzes the ATP-dependent phosphorylation of N-acetyl-L-glutamate. The protein is Acetylglutamate kinase of Salmonella paratyphi A (strain AKU_12601).